A 246-amino-acid polypeptide reads, in one-letter code: 3'(2'),5'-bisphosphate nucleotidase CysQ (246 aa).

Positions 64, 83, 85, 86, and 205 each coordinate Mg(2+). Glutamate 64 provides a ligand contact to substrate. Residues 85-88 and aspartate 205 each bind substrate; that span reads LDGT.

The protein belongs to the inositol monophosphatase superfamily. CysQ family. It depends on Mg(2+) as a cofactor.

Its subcellular location is the cell inner membrane. It catalyses the reaction adenosine 3',5'-bisphosphate + H2O = AMP + phosphate. With respect to regulation, inhibited by lithium and calcium. In terms of biological role, converts adenosine-3',5'-bisphosphate (PAP) to AMP. May also convert adenosine 3'-phosphate 5'-phosphosulfate (PAPS) to adenosine 5'-phosphosulfate (APS). Has 10000-fold lower activity towards inositol 1,4-bisphosphate (Ins(1,4)P2). This is 3'(2'),5'-bisphosphate nucleotidase CysQ from Escherichia coli (strain K12).